The sequence spans 138 residues: Glutaredoxin-like protein C5orf63 (138 aa).

The cysteines at positions 41 and 44 are disulfide-linked. The span at 55–64 shows a compositional bias: basic and acidic residues; it reads ENRQPYKDQK. The tract at residues 55–88 is disordered; the sequence is ENRQPYKDQKLPGTRRRRSPSSPSHPHMASQSGK.

The protein belongs to the glutaredoxin family. YDR286C subfamily.

The polypeptide is Glutaredoxin-like protein C5orf63 (C5orf63) (Homo sapiens (Human)).